Reading from the N-terminus, the 344-residue chain is MGARKKRAPRRGSLGFSPRKRASRLVPRVKRWPEVDIGKPVPLAFLGYRAGMTHVFMVDDRPGRPTSGKEIFVPVTIVETPPMFVAAVRLYGYDPNRGRYSLGEAWAQPPPELELQRRISTLGSFDTDKMLKSLEERLDKAEDVRLIAASQPKLAGGLSKKKPDLLEIKVGGVSDVTKLFDYAKDVLGNLIAVNDVFEEGQLVDVIAVTKGKGFQGVIKRWGVKELPRWHKHRKGSRRIGARSHGRSTFWETPQAGQTGFHRRTEYNKRILMIDDDGYKVTPAGGFLRYGVVRSTFVMLSGSIPGTPKRPIVMRWAIRPPEWYLKLGVRKPEITYISLASKQGV.

Belongs to the universal ribosomal protein uL3 family. In terms of assembly, part of the 50S ribosomal subunit. Forms a cluster with proteins L14 and L24e.

One of the primary rRNA binding proteins, it binds directly near the 3'-end of the 23S rRNA, where it nucleates assembly of the 50S subunit. The protein is Large ribosomal subunit protein uL3 of Aeropyrum pernix (strain ATCC 700893 / DSM 11879 / JCM 9820 / NBRC 100138 / K1).